A 585-amino-acid chain; its full sequence is Frizzled-10 (585 aa).

Residues 1–24 (MGPAAGNLVRAVLALCWLAEHCAG) form the signal peptide. Topologically, residues 25-229 (ISSIDIERPG…DVYWSKDDKQ (205 aa)) are extracellular. Residues 33-154 (PGDGRCQPIE…NDPNYLCMEA (122 aa)) enclose the FZ domain. 5 cysteine pairs are disulfide-bonded: C38–C99, C46–C92, C83–C121, C110–C151, and C114–C138. An N-linked (GlcNAc...) asparagine glycan is attached at N52. The segment at 155 to 195 (PNNGSDEPPRGSSMLPPMFRPQRPSTGHDLQQHKDSLSRTS) is disordered. The N-linked (GlcNAc...) asparagine glycan is linked to N157. Residues 230 to 250 (FAVIWIAIWSILCFFSSAFTV) traverse the membrane as a helical segment. Over 251 to 265 (LTFLIDPQRFKYPER) the chain is Cytoplasmic. The helical transmembrane segment at 266 to 286 (PIIFLSMCYCVYSVGYIIRLF) threads the bilayer. Residues 287-314 (SGAESIACDRDSGQLYVIQEGLESTGCT) lie on the Extracellular side of the membrane. Residues 315–335 (IVFLVLYYFGMASSLWWVILT) form a helical membrane-spanning segment. The Cytoplasmic portion of the chain corresponds to 336–355 (LTWFLAAGKKWGHEAIEANS). Residues 356–376 (SYFHLAAWAIPAVKTIMILVM) form a helical membrane-spanning segment. The Extracellular portion of the chain corresponds to 377–397 (RRVAGDELTGLCYVGSMDVNA). Residues 398–418 (LTGFVLIPLACYLIIGTSFIL) traverse the membrane as a helical segment. At 419–447 (SGFVALFHIRRVMKTGGENTDKLEKLMVR) the chain is on the cytoplasmic side. The helical transmembrane segment at 448-468 (IGVFSVLYTVPATCVIACYFY) threads the bilayer. Residues 469–506 (ERLNMDYWKIVASQQKCKMNNQTKNLDCMMNNSIPAVE) are Extracellular-facing. N-linked (GlcNAc...) asparagine glycans are attached at residues N489 and N499. The chain crosses the membrane as a helical span at residues 507–527 (IFMVKIFMLLVVGITSGMWIW). Residues 528–585 (TSKTLQSWQNVCSRRLKKRSRRKPASVITSSGIYKKPQHPQKTHLAKYESTLQPPTCV) lie on the Cytoplasmic side of the membrane. The Lys-Thr-X-X-X-Trp motif, mediates interaction with the PDZ domain of Dvl family members motif lies at 530–535 (KTLQSW). The short motif at 583–585 (TCV) is the PDZ-binding element.

It belongs to the G-protein coupled receptor Fz/Smo family. In terms of assembly, interacts with WNT7A. As to expression, expressed in the dorsal ectoderm overlying the developing spinal cord.

It is found in the cell membrane. Functionally, receptor for Wnt proteins. Functions in the canonical Wnt/beta-catenin signaling pathway. Activation by WNT7A induces expression of beta-catenin target genes. The canonical Wnt/beta-catenin signaling pathway leads to the activation of disheveled proteins, inhibition of GSK-3 kinase, nuclear accumulation of beta-catenin and activation of Wnt target genes. A second signaling pathway involving PKC and calcium fluxes has been seen for some family members, but it is not yet clear if it represents a distinct pathway or if it can be integrated in the canonical pathway, as PKC seems to be required for Wnt-mediated inactivation of GSK-3 kinase. Both pathways seem to involve interactions with G-proteins. May be involved in transduction and intercellular transmission of polarity information during tissue morphogenesis and/or in differentiated tissues. The sequence is that of Frizzled-10 (FZD10) from Gallus gallus (Chicken).